The chain runs to 102 residues: Small ribosomal subunit protein uS10 (102 aa).

This sequence belongs to the universal ribosomal protein uS10 family. Part of the 30S ribosomal subunit.

Involved in the binding of tRNA to the ribosomes. The sequence is that of Small ribosomal subunit protein uS10 from Allorhizobium ampelinum (strain ATCC BAA-846 / DSM 112012 / S4) (Agrobacterium vitis (strain S4)).